An 809-amino-acid chain; its full sequence is Ferric-pyoverdine BN7/BN8 receptor (809 aa).

The first 45 residues, 1–45 (MNHTARKRQGWQRSVSQKLAGAVVQGIACMGASAPLLLMPAWATA), serve as a signal peptide directing secretion. One can recognise a TBDR plug domain in the interval 166–273 (TPRETPQSLT…PSATINLIRK (108 aa)). Positions 278–809 (EAQASITGEA…NVMTSFKYSF (532 aa)) constitute a TBDR beta-barrel domain. A TonB C-terminal box motif is present at residues 792 to 809 (YGVYGTPRNVMTSFKYSF).

It belongs to the TonB-dependent receptor family.

The protein localises to the cell outer membrane. Its function is as follows. Specific receptor for the siderophores ferric pyoverdines (pseudobactins) BN8 and BN7, iron chelating molecules that allow the organism to extract iron from the environment, especially under iron-restricted conditions. The protein is Ferric-pyoverdine BN7/BN8 receptor (pupB) of Pseudomonas putida (Arthrobacter siderocapsulatus).